The primary structure comprises 649 residues: 1,4-alpha-glucan branching enzyme GlgB (649 aa).

Aspartate 315 acts as the Nucleophile in catalysis. Residue glutamate 366 is the Proton donor of the active site.

The protein belongs to the glycosyl hydrolase 13 family. GlgB subfamily. Monomer.

The enzyme catalyses Transfers a segment of a (1-&gt;4)-alpha-D-glucan chain to a primary hydroxy group in a similar glucan chain.. It functions in the pathway glycan biosynthesis; glycogen biosynthesis. In terms of biological role, catalyzes the formation of the alpha-1,6-glucosidic linkages in glycogen by scission of a 1,4-alpha-linked oligosaccharide from growing alpha-1,4-glucan chains and the subsequent attachment of the oligosaccharide to the alpha-1,6 position. This is 1,4-alpha-glucan branching enzyme GlgB from Ligilactobacillus salivarius (strain UCC118) (Lactobacillus salivarius).